Reading from the N-terminus, the 156-residue chain is 6,7-dimethyl-8-ribityllumazine synthase (156 aa).

Residues Phe-22, 57–59 (AYE), and 81–83 (TVI) contribute to the 5-amino-6-(D-ribitylamino)uracil site. (2S)-2-hydroxy-3-oxobutyl phosphate is bound at residue 86–87 (GT). The active-site Proton donor is His-89. A 5-amino-6-(D-ribitylamino)uracil-binding site is contributed by Phe-114. Arg-128 provides a ligand contact to (2S)-2-hydroxy-3-oxobutyl phosphate.

It belongs to the DMRL synthase family. As to quaternary structure, forms an icosahedral capsid composed of 60 subunits, arranged as a dodecamer of pentamers.

The catalysed reaction is (2S)-2-hydroxy-3-oxobutyl phosphate + 5-amino-6-(D-ribitylamino)uracil = 6,7-dimethyl-8-(1-D-ribityl)lumazine + phosphate + 2 H2O + H(+). The protein operates within cofactor biosynthesis; riboflavin biosynthesis; riboflavin from 2-hydroxy-3-oxobutyl phosphate and 5-amino-6-(D-ribitylamino)uracil: step 1/2. Catalyzes the formation of 6,7-dimethyl-8-ribityllumazine by condensation of 5-amino-6-(D-ribitylamino)uracil with 3,4-dihydroxy-2-butanone 4-phosphate. This is the penultimate step in the biosynthesis of riboflavin. This is 6,7-dimethyl-8-ribityllumazine synthase from Yersinia pseudotuberculosis serotype O:1b (strain IP 31758).